The following is a 505-amino-acid chain: Glycerol kinase 3 (505 aa).

Residue T12 participates in ADP binding. ATP is bound by residues T12, T13, and S14. T12 is a sn-glycerol 3-phosphate binding site. R16 serves as a coordination point for ADP. Positions 82, 83, 134, and 249 each coordinate sn-glycerol 3-phosphate. Residues R82, E83, Y134, D249, and Q250 each contribute to the glycerol site. Residues T271 and G315 each coordinate ADP. ATP contacts are provided by T271, G315, Q319, and G416. 2 residues coordinate ADP: G416 and N420.

The protein belongs to the FGGY kinase family.

The catalysed reaction is glycerol + ATP = sn-glycerol 3-phosphate + ADP + H(+). It functions in the pathway polyol metabolism; glycerol degradation via glycerol kinase pathway; sn-glycerol 3-phosphate from glycerol: step 1/1. Its activity is regulated as follows. Inhibited by fructose 1,6-bisphosphate (FBP). Key enzyme in the regulation of glycerol uptake and metabolism. Catalyzes the phosphorylation of glycerol to yield sn-glycerol 3-phosphate. In Streptomyces avermitilis (strain ATCC 31267 / DSM 46492 / JCM 5070 / NBRC 14893 / NCIMB 12804 / NRRL 8165 / MA-4680), this protein is Glycerol kinase 3.